The following is a 220-amino-acid chain: 7-cyano-7-deazaguanine synthase (220 aa).

10-20 (FSGGQDSTTCL) lines the ATP pocket. Zn(2+) is bound by residues Cys-186, Cys-195, Cys-198, and Cys-201.

It belongs to the QueC family. Homodimer. It depends on Zn(2+) as a cofactor.

It catalyses the reaction 7-carboxy-7-deazaguanine + NH4(+) + ATP = 7-cyano-7-deazaguanine + ADP + phosphate + H2O + H(+). It functions in the pathway purine metabolism; 7-cyano-7-deazaguanine biosynthesis. Catalyzes the ATP-dependent conversion of 7-carboxy-7-deazaguanine (CDG) to 7-cyano-7-deazaguanine (preQ(0)). The polypeptide is 7-cyano-7-deazaguanine synthase (Bacillus mycoides (strain KBAB4) (Bacillus weihenstephanensis)).